The sequence spans 144 residues: Large ribosomal subunit protein uL14 (144 aa).

Residues 107–144 form a disordered region; that stretch reads NEGYTHSQHSNQREGGERIQAQPSPPHARRAVKTSFCR.

It belongs to the universal ribosomal protein uL14 family. As to quaternary structure, part of the 50S ribosomal subunit. Forms a cluster with proteins L3 and L19. In the 70S ribosome, L14 and L19 interact and together make contacts with the 16S rRNA in bridges B5 and B8.

In terms of biological role, binds to 23S rRNA. Forms part of two intersubunit bridges in the 70S ribosome. This chain is Large ribosomal subunit protein uL14, found in Xanthobacter autotrophicus (strain ATCC BAA-1158 / Py2).